A 319-amino-acid chain; its full sequence is Ribonuclease Z (319 aa).

Zn(2+)-binding residues include histidine 62, histidine 64, aspartate 66, histidine 67, histidine 139, aspartate 209, and histidine 268. Aspartate 66 serves as the catalytic Proton acceptor.

This sequence belongs to the RNase Z family. As to quaternary structure, homodimer. Requires Zn(2+) as cofactor.

The catalysed reaction is Endonucleolytic cleavage of RNA, removing extra 3' nucleotides from tRNA precursor, generating 3' termini of tRNAs. A 3'-hydroxy group is left at the tRNA terminus and a 5'-phosphoryl group is left at the trailer molecule.. Functionally, zinc phosphodiesterase, which displays some tRNA 3'-processing endonuclease activity. Probably involved in tRNA maturation, by removing a 3'-trailer from precursor tRNA. This is Ribonuclease Z from Pseudomonas putida (strain ATCC 47054 / DSM 6125 / CFBP 8728 / NCIMB 11950 / KT2440).